The sequence spans 157 residues: Endoribonuclease YbeY (157 aa).

Residues histidine 122, histidine 126, and histidine 132 each contribute to the Zn(2+) site.

This sequence belongs to the endoribonuclease YbeY family. It depends on Zn(2+) as a cofactor.

Its subcellular location is the cytoplasm. Its function is as follows. Single strand-specific metallo-endoribonuclease involved in late-stage 70S ribosome quality control and in maturation of the 3' terminus of the 16S rRNA. The polypeptide is Endoribonuclease YbeY (Bacillus subtilis (strain 168)).